The primary structure comprises 158 residues: UPF0178 protein Rpal_2485 (158 aa).

The protein belongs to the UPF0178 family.

This Rhodopseudomonas palustris (strain TIE-1) protein is UPF0178 protein Rpal_2485.